A 389-amino-acid chain; its full sequence is MVTVEDIRRAQRAEGPATVMAIGTATPPNCVDQSTYPDYYFRITNSEHKAELKEKFKRMCDKSMIKKRYMYLTEEILKENPQVCEYMAPSLDARQDMVVVEVPKLGKEAATKAIKEWGQPKSKITHLVFCTTSGVDMPGADYQLTKLLGLRPSVKRLMMYQQGCFAGGTVLRLAKDLAENNKGARVLVVCSEITAVTFRGPSDTHLDSLVGQALFGDGAAAIIVGSDPIPEVEKPLFELVSAAQTILPDSDGAIDGHLREVGLTFHLLKDVPGLISKNIEKSLAEAFQPLGISDWNSLFWIAHPGGPAILDQVELKLGLKEEKLRATRHVLSEYGNMSSACVLFILDEMRKKSAADGLKTTGEGLEWGVLFGFGPGLTVETVVLHSLST.

The active site involves Cys164.

Belongs to the thiolase-like superfamily. Chalcone/stilbene synthases family.

The enzyme catalyses (E)-4-coumaroyl-CoA + 3 malonyl-CoA + 3 H(+) = 2',4,4',6'-tetrahydroxychalcone + 3 CO2 + 4 CoA. The protein operates within secondary metabolite biosynthesis; flavonoid biosynthesis. Functionally, the primary product of this enzyme is 4,2',4',6'-tetrahydroxychalcone (also termed naringenin-chalcone or chalcone) which can under specific conditions spontaneously isomerize into naringenin. The polypeptide is Chalcone synthase 1 (CHS1) (Camellia sinensis (Tea plant)).